Here is a 175-residue protein sequence, read N- to C-terminus: Peptide deformylase (175 aa).

The Fe cation site is built by Cys96 and His138. Glu139 is a catalytic residue. His142 provides a ligand contact to Fe cation.

This sequence belongs to the polypeptide deformylase family. Requires Fe(2+) as cofactor.

It catalyses the reaction N-terminal N-formyl-L-methionyl-[peptide] + H2O = N-terminal L-methionyl-[peptide] + formate. In terms of biological role, removes the formyl group from the N-terminal Met of newly synthesized proteins. Requires at least a dipeptide for an efficient rate of reaction. N-terminal L-methionine is a prerequisite for activity but the enzyme has broad specificity at other positions. The polypeptide is Peptide deformylase (Rhodopseudomonas palustris (strain BisB18)).